Here is a 533-residue protein sequence, read N- to C-terminus: Bifunctional aspartate aminotransferase and L-aspartate beta-decarboxylase (533 aa).

L-aspartate contacts are provided by G115 and N256. The residue at position 315 (K315) is an N6-(pyridoxal phosphate)lysine. Residue R497 coordinates L-aspartate.

The protein belongs to the class-I pyridoxal-phosphate-dependent aminotransferase family. Homododecamer. Pyridoxal 5'-phosphate serves as cofactor.

It carries out the reaction L-aspartate + H(+) = L-alanine + CO2. It catalyses the reaction L-aspartate + 2-oxoglutarate = oxaloacetate + L-glutamate. Functionally, bifunctional enzyme that has both L-aspartate decarboxylase and transaminase activity. This Comamonas testosteroni (Pseudomonas testosteroni) protein is Bifunctional aspartate aminotransferase and L-aspartate beta-decarboxylase.